The sequence spans 910 residues: Chitin synthase A (910 aa).

Residues asparagine 56–proline 156 are disordered. 2 stretches are compositionally biased toward basic and acidic residues: residues tyrosine 57–alanine 84 and aspartate 130–proline 148. 9 helical membrane passes run tryptophan 366–glycine 386, serine 448–leucine 468, valine 583–phenylalanine 603, valine 620–serine 640, methionine 655–valine 675, threonine 701–leucine 721, phenylalanine 730–cysteine 750, glycine 828–glycine 848, and leucine 876–valine 896.

This sequence belongs to the chitin synthase family. Class I subfamily.

It is found in the cell membrane. The catalysed reaction is [(1-&gt;4)-N-acetyl-beta-D-glucosaminyl](n) + UDP-N-acetyl-alpha-D-glucosamine = [(1-&gt;4)-N-acetyl-beta-D-glucosaminyl](n+1) + UDP + H(+). Polymerizes chitin, a structural polymer of the cell wall and septum, by transferring the sugar moiety of UDP-GlcNAc to the non-reducing end of the growing chitin polymer. In Ampelomyces quisqualis (Powdery mildew agent), this protein is Chitin synthase A (CHSA).